The sequence spans 288 residues: UTP--glucose-1-phosphate uridylyltransferase (288 aa).

The protein belongs to the UDPGP type 2 family.

The catalysed reaction is alpha-D-glucose 1-phosphate + UTP + H(+) = UDP-alpha-D-glucose + diphosphate. It participates in glycolipid metabolism; diglucosyl-diacylglycerol biosynthesis. In terms of biological role, catalyzes the formation of UDP-glucose from glucose-1-phosphate and UTP. This is an intermediate step in the biosynthesis of diglucosyl-diacylglycerol (Glc2-DAG), i.e. the predominant glycolipid found in the S.aureus membrane, which is also used as a membrane anchor for lipoteichoic acid (LTA). This chain is UTP--glucose-1-phosphate uridylyltransferase (gtaB), found in Staphylococcus aureus (strain USA300).